The sequence spans 479 residues: Sulfate adenylyltransferase subunit 1 (479 aa).

The tr-type G domain maps to 25–239 (KSLLRFLTCG…EVLETVDIQR (215 aa)). The G1 stretch occupies residues 34 to 41 (GSVDDGKS). 34-41 (GSVDDGKS) lines the GTP pocket. Residues 92–96 (GITID) form a G2 region. The interval 113-116 (DTPG) is G3. GTP is bound by residues 113 to 117 (DTPGH) and 168 to 171 (NKMD). Positions 168-171 (NKMD) are G4. The G5 stretch occupies residues 206–208 (SAL).

It belongs to the TRAFAC class translation factor GTPase superfamily. Classic translation factor GTPase family. CysN/NodQ subfamily. In terms of assembly, heterodimer composed of CysD, the smaller subunit, and CysN.

The enzyme catalyses sulfate + ATP + H(+) = adenosine 5'-phosphosulfate + diphosphate. Its pathway is sulfur metabolism; hydrogen sulfide biosynthesis; sulfite from sulfate: step 1/3. Functionally, with CysD forms the ATP sulfurylase (ATPS) that catalyzes the adenylation of sulfate producing adenosine 5'-phosphosulfate (APS) and diphosphate, the first enzymatic step in sulfur assimilation pathway. APS synthesis involves the formation of a high-energy phosphoric-sulfuric acid anhydride bond driven by GTP hydrolysis by CysN coupled to ATP hydrolysis by CysD. In Salmonella typhi, this protein is Sulfate adenylyltransferase subunit 1.